Here is a 676-residue protein sequence, read N- to C-terminus: DNA ligase (676 aa).

Residues 35 to 39, 84 to 85, and Glu115 contribute to the NAD(+) site; these read DNEYD and SL. The active-site N6-AMP-lysine intermediate is the Lys117. Positions 138, 177, 294, and 318 each coordinate NAD(+). Residues Cys412, Cys415, Cys430, and Cys436 each coordinate Zn(2+). The BRCT domain occupies 595–676; the sequence is PTRQPLNGES…FLAFLAQYSA (82 aa).

The protein belongs to the NAD-dependent DNA ligase family. LigA subfamily. Mg(2+) is required as a cofactor. It depends on Mn(2+) as a cofactor.

It catalyses the reaction NAD(+) + (deoxyribonucleotide)n-3'-hydroxyl + 5'-phospho-(deoxyribonucleotide)m = (deoxyribonucleotide)n+m + AMP + beta-nicotinamide D-nucleotide.. DNA ligase that catalyzes the formation of phosphodiester linkages between 5'-phosphoryl and 3'-hydroxyl groups in double-stranded DNA using NAD as a coenzyme and as the energy source for the reaction. It is essential for DNA replication and repair of damaged DNA. In Acinetobacter baylyi (strain ATCC 33305 / BD413 / ADP1), this protein is DNA ligase.